The following is a 188-amino-acid chain: Large ribosomal subunit protein eL18 (188 aa).

The interval 147–188 (EANKHFGPAPGVPHSHTKAHVRSKGRQFERARGRRTSKGYKK) is disordered. Basic residues-rich tracts occupy residues 161–171 (SHTKAHVRSKG) and 178–188 (RGRRTSKGYKK).

It belongs to the eukaryotic ribosomal protein eL18 family.

It localises to the cytoplasm. This Diaphorina citri (Asian citrus psyllid) protein is Large ribosomal subunit protein eL18 (RpL18).